The sequence spans 289 residues: Glucose and ribitol dehydrogenase homolog 2 (289 aa).

The interval 1-32 (MASGFPPQKQETQPGIQHVMEPTPEFSSSNYK) is disordered. 43-67 (LVTGGDSGIGKAVCHCYALEGASVA) lines the NAD(+) pocket. S180 is a binding site for substrate. Residue Y193 is the Proton acceptor of the active site.

This sequence belongs to the short-chain dehydrogenases/reductases (SDR) family.

May act as a short alcohol-polyol-sugar dehydrogenase possibly related to carbohydrate metabolism and the acquisition of desiccation tolerance. May also be involved in signal transduction. The chain is Glucose and ribitol dehydrogenase homolog 2 from Arabidopsis thaliana (Mouse-ear cress).